A 498-amino-acid chain; its full sequence is MNNYNNFFVKFNNQNFSDFYNSDTLSDINITLSDNLKTVSLKLHRIVLFANCEFFKGMFSGFNESIQKENIIKVPNIDICCDIIKQMYGISLSEINRDWKYMLRYYKCCDYFMLESNFPENINVSRCEFDELLDLVDEIGYNEKTIKLLAQNMPINYNITNLPSDLLSELLNYTNVNSFIFVKDFSIYLVNNDDIPKHLTNTESTVICYVPNLNRLFFKANNRLNFMDLDTEYIQQINLNNVGIINSMLCDHNTNNLIINYKSRGESIESRIEIFDTDKLKITKTIYKTNKYNINNLCLSKDFSKLAFTLSKTTLNPYTYKEIIHIYNFLTEELCEFPDEFNSKIHCLKFMNNDKDFIYYLKKDYHYQVFTCINNTHHNIFRTENIEYLEIYLDKYILLNTGYSMTIISLDKSCMGKIRDFVGEYIITPNNHVICYGYHTKSLDISQIINNLAENKEIQITSFGSPYYGIKNIFFVNDKNCLKRRIEDYLKSILKTTN.

Residues 26 to 96 form the BTB domain; sequence SDINITLSDN…MYGISLSEIN (71 aa).

Belongs to the mimivirus BTB/WD family.

This Acanthamoeba polyphaga (Amoeba) protein is Putative BTB/POZ domain-containing protein L67.